The primary structure comprises 282 residues: Trihydroxynaphthalene reductase (282 aa).

NADP(+) contacts are provided by Ile41, Asn114, and Arg147. Catalysis depends on proton donor residues Ser164 and Tyr178. Tyr178, Lys182, Ile211, and Thr213 together coordinate NADP(+). Catalysis depends on Lys182, which acts as the Lowers pKa of active site Tyr.

This sequence belongs to the short-chain dehydrogenases/reductases (SDR) family. As to quaternary structure, homotetramer.

It participates in pigment biosynthesis; melanin biosynthesis. Functionally, catalyzes the NADPH-dependent reduction of 1,3,8-trihydroxynaphthalene (T3HN) into (-)-vermelone. Essential for appressorial penetration of colletotrichum lagenarium. The protein is Trihydroxynaphthalene reductase (THR1) of Colletotrichum orbiculare (strain 104-T / ATCC 96160 / CBS 514.97 / LARS 414 / MAFF 240422) (Cucumber anthracnose fungus).